The chain runs to 420 residues: Pyrin and HIN domain-containing protein 1 (420 aa).

The Pyrin domain occupies 1 to 87 (MVNEYKRIVL…ANKLKNEKAK (87 aa)). 2 disordered regions span residues 82–201 (KNEK…SSSA) and 216–236 (RLKNVPKEPSEENGHQQGSKK). A compositionally biased stretch (basic residues) spans 87–102 (KAKRTRTGKRKTAAKR). 2 stretches are compositionally biased toward polar residues: residues 108 to 118 (PSTSQPMSTTN) and 126 to 151 (GRSTPDTQVAQLSLPTASRRNQAIQI). Low complexity predominate over residues 152-169 (SPTIASSSGQTSSRSSET). Positions 170–201 (LQSIIQSPKTPKRPSSSILDPPVSSGTASSSA) are enriched in polar residues. The HIN-200 domain maps to 219-416 (NVPKEPSEEN…STTHSNMQVI (198 aa)). Over residues 220–229 (VPKEPSEENG) the composition is skewed to basic and acidic residues.

The protein belongs to the HIN-200 family.

The protein localises to the nucleus. This chain is Pyrin and HIN domain-containing protein 1, found in Mus musculus (Mouse).